The following is a 281-amino-acid chain: Pantothenate synthetase (281 aa).

26–33 lines the ATP pocket; that stretch reads MGNLHDGH. The active-site Proton donor is His33. Gln57 lines the (R)-pantoate pocket. Beta-alanine is bound at residue Gln57. 145-148 is an ATP binding site; it reads GEKD. Gln151 is a binding site for (R)-pantoate. 182 to 185 lines the ATP pocket; the sequence is MSSR.

The protein belongs to the pantothenate synthetase family. In terms of assembly, homodimer.

Its subcellular location is the cytoplasm. The enzyme catalyses (R)-pantoate + beta-alanine + ATP = (R)-pantothenate + AMP + diphosphate + H(+). It functions in the pathway cofactor biosynthesis; (R)-pantothenate biosynthesis; (R)-pantothenate from (R)-pantoate and beta-alanine: step 1/1. Catalyzes the condensation of pantoate with beta-alanine in an ATP-dependent reaction via a pantoyl-adenylate intermediate. The polypeptide is Pantothenate synthetase (Idiomarina loihiensis (strain ATCC BAA-735 / DSM 15497 / L2-TR)).